We begin with the raw amino-acid sequence, 140 residues long: Coiled-coil domain-containing protein 126 (140 aa).

The N-terminal stretch at 1 to 35 (MFRTISRKNMSQKLSFLLLVFGLIWGLMLLHYTLQ) is a signal peptide. N110 carries an N-linked (GlcNAc...) asparagine glycan. Over residues 118–130 (NGTNGNLVPVTTN) the composition is skewed to low complexity. The disordered stretch occupies residues 118–140 (NGTNGNLVPVTTNKRTSVSGSVR). Over residues 131–140 (KRTSVSGSVR) the composition is skewed to polar residues.

It is found in the secreted. The protein is Coiled-coil domain-containing protein 126 (Ccdc126) of Mus musculus (Mouse).